The sequence spans 329 residues: Pantothenate kinase (329 aa).

Position 107–114 (107–114 (GSVAVGKS)) interacts with ATP.

The protein belongs to the prokaryotic pantothenate kinase family.

The protein localises to the cytoplasm. The enzyme catalyses (R)-pantothenate + ATP = (R)-4'-phosphopantothenate + ADP + H(+). It functions in the pathway cofactor biosynthesis; coenzyme A biosynthesis; CoA from (R)-pantothenate: step 1/5. The chain is Pantothenate kinase from Streptomyces avermitilis (strain ATCC 31267 / DSM 46492 / JCM 5070 / NBRC 14893 / NCIMB 12804 / NRRL 8165 / MA-4680).